Reading from the N-terminus, the 387-residue chain is GDP-mannose transporter (387 aa).

The span at 1-25 (MADTKKNDNYAIDMDKLDAESDRFR) shows a compositional bias: basic and acidic residues. The Cytoplasmic portion of the chain corresponds to 1–42 (MADTKKNDNYAIDMDKLDAESDRFRPPPQPQPRHSSSSHSQS). The segment at 1–45 (MADTKKNDNYAIDMDKLDAESDRFRPPPQPQPRHSSSSHSQSISN) is disordered. Residues 32–45 (PRHSSSSHSQSISN) are compositionally biased toward low complexity. A helical transmembrane segment spans residues 43 to 63 (ISNSPVLPILSYCASSILMTV). Residues 64 to 71 (TNKYVLSG) are Lumenal-facing. The chain crosses the membrane as a helical span at residues 72–92 (VQFNLNFFLLCVQSVVCIIAI). At 93–112 (QTCKSMGLINYRDFNSDEAK) the chain is on the cytoplasmic side. Residues 113–129 (KWFPISLLLIGMIYTGT) traverse the membrane as a helical segment. The Lumenal portion of the chain corresponds to 130–136 (KALKFLS). A helical transmembrane segment spans residues 137 to 153 (IPVYTIFKNLTIILIAY). The Cytoplasmic segment spans residues 154-162 (GEVLWFGGS). Residues 163-184 (VTGMALFSFGLMVLSSVIAAWA) traverse the membrane as a helical segment. The Lumenal segment spans residues 185–206 (DIKHALDTSGFSGAEATSKIST). Residues 207-227 (LNAGYIWMLINCLCTSTYILG) form a helical membrane-spanning segment. At 228–241 (MRKRIKLTNFKDFD) the chain is on the cytoplasmic side. Residues 242 to 262 (TMFYNNLLSIPILMIGSFIVE) traverse the membrane as a helical segment. Residues 263–280 (DWSSENINKNFPIETRNS) lie on the Lumenal side of the membrane. A helical membrane pass occupies residues 281 to 301 (LIFAMIFSGLSSVFISYTSAW). The Cytoplasmic portion of the chain corresponds to 302 to 309 (CVRVTSST). The chain crosses the membrane as a helical span at residues 310–329 (TYSMVGALNKLPIALSGLIF). Over 330 to 332 (FGD) the chain is Lumenal. A helical membrane pass occupies residues 333 to 355 (PVTVPSVSAIVVGFISGIVYSLA). Residues 356–387 (KVKQNAKPRTGVLPTTNPVSASTQSMRDGLKS) are Cytoplasmic-facing. Residues 366-387 (GVLPTTNPVSASTQSMRDGLKS) form a disordered region. Polar residues predominate over residues 368-381 (LPTTNPVSASTQSM).

The protein belongs to the TPT transporter family. SLC35D subfamily. In terms of assembly, homooligomer.

It is found in the golgi apparatus membrane. Its subcellular location is the cytoplasmic vesicle membrane. The protein localises to the endoplasmic reticulum membrane. Involved in the import of GDP-mannose from the cytoplasm into the Golgi lumen. In Coccidioides immitis (strain RS) (Valley fever fungus), this protein is GDP-mannose transporter (VRG4).